The sequence spans 804 residues: MSMHRVARAVASSEACAGALRGSVSRTRFLCLNAPVQRFGARNALLGAGLGAKRHFFQSPIIRSGVAQAVLEKAAADPSALTQEAIVDNLNAAERDRLRRVRNIGIAAHIDSGKTTATERVLFYTGRINAIHEVRGKDAVGAKMDSMELEREKGITIQSAATFCDWMKVENGKEEKYHINLIDTPGHIDFTIEVERALRVLDGAVMILCAVSGVQSQTITVDRQMRRYNVPRISFINKMDRMGANPFKAVEQINQKLRIPAAALQVPIGSEDSFNGVVDLIRMKAIYNDGPKGEIIRETDEIPEELKQLCKEKRALLIETLADVDDEIAEIFLDEKTPSIEQMKAAIRRATINLKFTPVLMGSALADKSVQPMLDAVCDYLPNPAEVENLALDKRRAEAPVKLVSYNELPFVGLAFKLEESNYGQLTYIRVYQGSLRKGMNVFNARTDKRVKIPRIVRMHSNEMEEVPEIGAGEICAVFGVDCASGDTFTDGGLPYSMSSMFVPDPVISLSIKPKTTKDGSNFSKAMNRFQREDPTFRVHVDAESQETIISGMGELHLDIYVERMRREYKVEVETGKPQVAYRETITEHVTFDHTLKKQTGGAGDYARVVGFLEPIEAGPNGYAPSTFKEEVTGGSISDKFLFACEKGFLASCEKGPLLGHPVLGTHMVVNDGATHMTDSSEMAFKNATQQAFRKAFKEGKPQVLEPLMKTTITAPNEFQGNIVGLLNKRNAIISDTEIGPEDFTLIADCSLNAMFGFSSQLRAATQGKGEFGMEFSHYAPAPGQLQKELISNYEKAQADRHKK.

The transit peptide at 1 to 63 (MSMHRVARAV…RHFFQSPIIR (63 aa)) directs the protein to the mitochondrion. Positions 99 to 385 (RRVRNIGIAA…AVCDYLPNPA (287 aa)) constitute a tr-type G domain. Residues 108-115 (AHIDSGKT), 183-187 (DTPGH), and 237-240 (NKMD) contribute to the GTP site.

This sequence belongs to the TRAFAC class translation factor GTPase superfamily. Classic translation factor GTPase family. EF-G/EF-2 subfamily.

It is found in the mitochondrion. Its pathway is protein biosynthesis; polypeptide chain elongation. Its function is as follows. Mitochondrial GTPase that catalyzes the GTP-dependent ribosomal translocation step during translation elongation. During this step, the ribosome changes from the pre-translocational (PRE) to the post-translocational (POST) state as the newly formed A-site-bound peptidyl-tRNA and P-site-bound deacylated tRNA move to the P and E sites, respectively. Catalyzes the coordinated movement of the two tRNA molecules, the mRNA and conformational changes in the ribosome. The protein is Elongation factor G, mitochondrial (mef1) of Sclerotinia sclerotiorum (strain ATCC 18683 / 1980 / Ss-1) (White mold).